Reading from the N-terminus, the 265-residue chain is Hydroxyethylthiazole kinase 1 (265 aa).

A substrate-binding site is contributed by methionine 39. ATP is bound by residues lysine 115 and threonine 168. A substrate-binding site is contributed by glycine 195.

Belongs to the Thz kinase family. It depends on Mg(2+) as a cofactor.

The enzyme catalyses 5-(2-hydroxyethyl)-4-methylthiazole + ATP = 4-methyl-5-(2-phosphooxyethyl)-thiazole + ADP + H(+). It participates in cofactor biosynthesis; thiamine diphosphate biosynthesis; 4-methyl-5-(2-phosphoethyl)-thiazole from 5-(2-hydroxyethyl)-4-methylthiazole: step 1/1. Catalyzes the phosphorylation of the hydroxyl group of 4-methyl-5-beta-hydroxyethylthiazole (THZ). The polypeptide is Hydroxyethylthiazole kinase 1 (Clostridium botulinum (strain Loch Maree / Type A3)).